A 239-amino-acid polypeptide reads, in one-letter code: 1-(5-phosphoribosyl)-5-[(5-phosphoribosylamino)methylideneamino] imidazole-4-carboxamide isomerase (239 aa).

Aspartate 8 (proton acceptor) is an active-site residue. Catalysis depends on aspartate 129, which acts as the Proton donor.

The protein belongs to the HisA/HisF family.

The protein resides in the cytoplasm. The catalysed reaction is 1-(5-phospho-beta-D-ribosyl)-5-[(5-phospho-beta-D-ribosylamino)methylideneamino]imidazole-4-carboxamide = 5-[(5-phospho-1-deoxy-D-ribulos-1-ylimino)methylamino]-1-(5-phospho-beta-D-ribosyl)imidazole-4-carboxamide. The protein operates within amino-acid biosynthesis; L-histidine biosynthesis; L-histidine from 5-phospho-alpha-D-ribose 1-diphosphate: step 4/9. This chain is 1-(5-phosphoribosyl)-5-[(5-phosphoribosylamino)methylideneamino] imidazole-4-carboxamide isomerase, found in Cereibacter sphaeroides (strain ATCC 17025 / ATH 2.4.3) (Rhodobacter sphaeroides).